The sequence spans 418 residues: ATP phosphoribosyltransferase regulatory subunit (418 aa).

It belongs to the class-II aminoacyl-tRNA synthetase family. HisZ subfamily. As to quaternary structure, heteromultimer composed of HisG and HisZ subunits.

It is found in the cytoplasm. Its pathway is amino-acid biosynthesis; L-histidine biosynthesis; L-histidine from 5-phospho-alpha-D-ribose 1-diphosphate: step 1/9. Its function is as follows. Required for the first step of histidine biosynthesis. May allow the feedback regulation of ATP phosphoribosyltransferase activity by histidine. The protein is ATP phosphoribosyltransferase regulatory subunit of Acetivibrio thermocellus (strain ATCC 27405 / DSM 1237 / JCM 9322 / NBRC 103400 / NCIMB 10682 / NRRL B-4536 / VPI 7372) (Clostridium thermocellum).